The primary structure comprises 359 residues: MTKQVLVELGERSYPIVIGQKLLSNGEPLARYLKNKNILIVTNETIAPLYLEKVQAMLSDFSCVTPVILPDGEQYKTLSQMDSIFTSLLQQNLGRDTVLIALGGGVIGDMTGFAAASYQRGIDFIQIPTTLLSQVDSSVGGKTAVNHPLGKNMIGAFYQPKYVLIDTDCLSTLPKREFAAGMAEVIKYGIMWDAEFFSWLEDNVEALKALDTHALEYAIGRCCEIKADVVEKDETEQAVRALLNLGHTFGHAIEAEMGYGVWLHGEAVSAGTVLAAITSNKLGLVEESIVCRITALFAAFDLPTSAPETMNFEQFIKHMRRDKKVLKGQLRLVLPEGLGRAGIYSNVTDEQLQEVIDCA.

NAD(+) is bound by residues 71-76 (DGEQYK), 105-109 (GVIGD), 129-130 (TT), K142, K151, and 169-172 (CLST). The Zn(2+) site is built by E184, H247, and H264.

This sequence belongs to the sugar phosphate cyclases superfamily. Dehydroquinate synthase family. The cofactor is Co(2+). Zn(2+) is required as a cofactor. It depends on NAD(+) as a cofactor.

It is found in the cytoplasm. It catalyses the reaction 7-phospho-2-dehydro-3-deoxy-D-arabino-heptonate = 3-dehydroquinate + phosphate. The protein operates within metabolic intermediate biosynthesis; chorismate biosynthesis; chorismate from D-erythrose 4-phosphate and phosphoenolpyruvate: step 2/7. Its function is as follows. Catalyzes the conversion of 3-deoxy-D-arabino-heptulosonate 7-phosphate (DAHP) to dehydroquinate (DHQ). The sequence is that of 3-dehydroquinate synthase from Shewanella piezotolerans (strain WP3 / JCM 13877).